A 160-amino-acid polypeptide reads, in one-letter code: NAD(P)H-quinone oxidoreductase subunit I, chloroplastic (160 aa).

4Fe-4S ferredoxin-type domains are found at residues 55 to 84 and 95 to 124; these read GRIHFEFDKCIACEVCVRVCPIDLPVVDWK and LNYSIDFGICIFCGNCVEYCPTNCLSMTEE. [4Fe-4S] cluster contacts are provided by Cys-64, Cys-67, Cys-70, Cys-74, Cys-104, Cys-107, Cys-110, and Cys-114.

It belongs to the complex I 23 kDa subunit family. NDH is composed of at least 16 different subunits, 5 of which are encoded in the nucleus. The cofactor is [4Fe-4S] cluster.

Its subcellular location is the plastid. The protein localises to the chloroplast thylakoid membrane. It catalyses the reaction a plastoquinone + NADH + (n+1) H(+)(in) = a plastoquinol + NAD(+) + n H(+)(out). The catalysed reaction is a plastoquinone + NADPH + (n+1) H(+)(in) = a plastoquinol + NADP(+) + n H(+)(out). Functionally, NDH shuttles electrons from NAD(P)H:plastoquinone, via FMN and iron-sulfur (Fe-S) centers, to quinones in the photosynthetic chain and possibly in a chloroplast respiratory chain. The immediate electron acceptor for the enzyme in this species is believed to be plastoquinone. Couples the redox reaction to proton translocation, and thus conserves the redox energy in a proton gradient. This chain is NAD(P)H-quinone oxidoreductase subunit I, chloroplastic, found in Cucumis sativus (Cucumber).